The chain runs to 368 residues: Methylthioribose-1-phosphate isomerase (368 aa).

Residues 54–56 (RGA), Arg91, and Gln204 each bind substrate. Asp245 functions as the Proton donor in the catalytic mechanism. 255–256 (NK) is a substrate binding site.

It belongs to the eIF-2B alpha/beta/delta subunits family. MtnA subfamily.

The enzyme catalyses 5-(methylsulfanyl)-alpha-D-ribose 1-phosphate = 5-(methylsulfanyl)-D-ribulose 1-phosphate. Its pathway is amino-acid biosynthesis; L-methionine biosynthesis via salvage pathway; L-methionine from S-methyl-5-thio-alpha-D-ribose 1-phosphate: step 1/6. In terms of biological role, catalyzes the interconversion of methylthioribose-1-phosphate (MTR-1-P) into methylthioribulose-1-phosphate (MTRu-1-P). The sequence is that of Methylthioribose-1-phosphate isomerase from Gluconobacter oxydans (strain 621H) (Gluconobacter suboxydans).